The chain runs to 384 residues: MAYRKSNLYLNLVNSYVIDSPQPSSINYWWNLGSLLGLCLVIQITTGIFLAMHYSSNIELAFSSVEHIMRDVQTGWLIRYMHTNGASFFFICMYIHIGKGLYYGSYKSPRVIVWTVGVIIFILTMAAAFLGYCLVYGQMSHWGATVITNLFSAIPFIGNDIVTWLWGSFSVSNPTIMRFFTFHYLVPFIIAAMVIMHLMTLHVHGSSNPLGITGNLDRLPMHGYFIFKDLVTVFVFMIFFSLFVFFSPNTLGHPDNYIPGNPLVTPASIVPEWYLLPFYTILRSIPDKLGGVITMFGTILVLLMLPITDRSIIRGNTFKTLSKFFFFLFITNFILLGKLGECHVEVPFILMGQICTFIYFAYFLILVPIISMIENILFYLTNKK.

4 helical membrane passes run 32–52 (LGSL…FLAM), 76–98 (WLIR…IHIG), 113–133 (VWTV…LGYC), and 179–199 (FFTF…MHLM). Heme b is bound by residues His-82 and His-96. Residues His-183 and His-197 each coordinate heme b. His-202 provides a ligand contact to a ubiquinone. Helical transmembrane passes span 225 to 245 (FIFK…LFVF), 289 to 309 (LGGV…PITD), 321 to 341 (LSKF…KLGE), and 348 to 368 (FILM…ILVP).

It belongs to the cytochrome b family. Fungal cytochrome b-c1 complex contains 10 subunits; 3 respiratory subunits, 2 core proteins and 5 low-molecular weight proteins. Cytochrome b-c1 complex is a homodimer. Requires heme b as cofactor.

It is found in the mitochondrion inner membrane. Component of the ubiquinol-cytochrome c reductase complex (complex III or cytochrome b-c1 complex) that is part of the mitochondrial respiratory chain. The b-c1 complex mediates electron transfer from ubiquinol to cytochrome c. Contributes to the generation of a proton gradient across the mitochondrial membrane that is then used for ATP synthesis. The sequence is that of Cytochrome b (COB) from Eremothecium gossypii (strain ATCC 10895 / CBS 109.51 / FGSC 9923 / NRRL Y-1056) (Yeast).